We begin with the raw amino-acid sequence, 760 residues long: Formate acetyltransferase 1 (760 aa).

One can recognise a PFL domain in the interval 3-625 (ELNEKLATAW…KTGNTPDGRR (623 aa)). Lysine 63 is modified (N6-acetyllysine; alternate). The residue at position 63 (lysine 63) is an N6-succinyllysine; alternate. Residue lysine 107 is modified to N6-succinyllysine. Lysine 117 is subject to N6-acetyllysine; alternate. Lysine 117 bears the N6-succinyllysine; alternate mark. Lysine 124 is modified (N6-succinyllysine). Residue lysine 195 is modified to N6-acetyllysine; alternate. Lysine 195 is subject to N6-succinyllysine; alternate. Cysteine 419 (S-acetylcysteine intermediate) is an active-site residue. Cysteine 420 functions as the Cysteine radical intermediate in the catalytic mechanism. Lysine 454 carries the post-translational modification N6-acetyllysine; alternate. Lysine 454 is modified (N6-succinyllysine; alternate). An N6-succinyllysine modification is found at lysine 467. N6-acetyllysine is present on residues lysine 541 and lysine 591. The Glycine radical domain maps to 632 to 760 (PGANPMHGRD…VITRTFTQSM (129 aa)). The residue at position 654 (lysine 654) is an N6-succinyllysine. A Glycine radical modification is found at glycine 735.

This sequence belongs to the glycyl radical enzyme (GRE) family. PFL subfamily. As to quaternary structure, homodimer. Interacts specifically with FocA.

The protein resides in the cytoplasm. The catalysed reaction is formate + acetyl-CoA = pyruvate + CoA. It functions in the pathway fermentation; pyruvate fermentation; formate from pyruvate: step 1/1. In terms of biological role, catalyzes the conversion of pyruvate to formate and acetyl-CoA. In addition, may be involved in the control of the activity of the formate channel FocA, via direct interaction with FocA. This is Formate acetyltransferase 1 (pflB) from Escherichia coli (strain K12).